The following is a 434-amino-acid chain: Cullin-like protein 5 (434 aa).

A disordered region spans residues 1-34 (MKRSISPDPFSSTKSPKLVHHSPDDGGAEGNPYR).

The protein belongs to the cullin family.

This is Cullin-like protein 5 from Arabidopsis thaliana (Mouse-ear cress).